Consider the following 311-residue polypeptide: Acetaldehyde dehydrogenase (311 aa).

C131 serves as the catalytic Acyl-thioester intermediate. Residues 162 to 170 (SVGPGTRKN) and N273 contribute to the NAD(+) site.

The protein belongs to the acetaldehyde dehydrogenase family.

The catalysed reaction is acetaldehyde + NAD(+) + CoA = acetyl-CoA + NADH + H(+). This Ralstonia pickettii (strain 12J) protein is Acetaldehyde dehydrogenase.